The sequence spans 389 residues: MVLINQLGAVLAVCATLTVAAPTKGKARFNVPQVAIPKKMVHHPAVSYARALHKFGMKVPKTVQDAAKGSVPTTPTPSDEQYVTQVTVGEGKLNLDLDTGSGDLQGHNLYKPTSNSKRLNGYSWQISYGDMSSAGGDVFLDTVSIGDVTASSQAVESAKKVSDQFAKDKATDGLMGLSFSVLNTVQPKPQTTFLDTVLSQLEKPLFTCTLKHGEPGSYDFGYIDDAKHSGEITYTQVDNSEGWWGFTADSYSIGGPNTTSFRGDSSGMANGGSISGIADTGTTLMLLSDDVVGEYYGQVQGATNDQQQGGYIFPCDAQLPDFTLSIGGYNAVVPGKFMNYQEIDGSMCFGGLQSSGSSGGPNIFGDVFLKSQFVVWDTQGPRIGFAPQA.

The first 20 residues, 1 to 20 (MVLINQLGAVLAVCATLTVA), serve as a signal peptide directing secretion. A propeptide spans 21–67 (APTKGKARFNVPQVAIPKKMVHHPAVSYARALHKFGMKVPKTVQDAA) (activation peptide). The Peptidase A1 domain maps to 82–386 (YVTQVTVGEG…DTQGPRIGFA (305 aa)). Asp-98 is a catalytic residue. N-linked (GlcNAc...) asparagine glycosylation occurs at Asn-257. The active site involves Asp-279. Residues Cys-315 and Cys-348 are joined by a disulfide bond.

The protein belongs to the peptidase A1 family. Monomer.

It localises to the secreted. Its function is as follows. Secreted aspartic endopeptidase that allows assimilation of proteinaceous substrates. The scissile peptide bond is attacked by a nucleophilic water molecule activated by two aspartic residues in the active site. Shows a broad primary substrate specificity. Favors hydrophobic residues at the P1 and P1' positions. The chain is Aspartic protease pepA from Arthroderma otae (strain ATCC MYA-4605 / CBS 113480) (Microsporum canis).